A 459-amino-acid chain; its full sequence is Bifunctional protein GlmU (459 aa).

Positions 1–230 are pyrophosphorylase; sequence MTTRNTIILA…FDESMGVNDR (230 aa). UDP-N-acetyl-alpha-D-glucosamine is bound by residues 9–12, Lys-23, Gln-73, 78–79, 101–103, Gly-140, Glu-155, Asn-170, and Asn-228; these read LAAG, GT, and SGD. Residue Asp-103 participates in Mg(2+) binding. Mg(2+) is bound at residue Asn-228. The linker stretch occupies residues 231 to 251; sequence VALSAATKIMRDRINEAHMRD. Residues 252–459 are N-acetyltransferase; it reads GVTLIDPATT…YQKLPYRGED (208 aa). UDP-N-acetyl-alpha-D-glucosamine contacts are provided by Arg-333 and Lys-351. His-363 acts as the Proton acceptor in catalysis. Tyr-366 and Asn-377 together coordinate UDP-N-acetyl-alpha-D-glucosamine. Residues 386–387, Ser-405, Ala-423, and Arg-440 contribute to the acetyl-CoA site; that span reads NY.

In the N-terminal section; belongs to the N-acetylglucosamine-1-phosphate uridyltransferase family. This sequence in the C-terminal section; belongs to the transferase hexapeptide repeat family. In terms of assembly, homotrimer. It depends on Mg(2+) as a cofactor.

Its subcellular location is the cytoplasm. The enzyme catalyses alpha-D-glucosamine 1-phosphate + acetyl-CoA = N-acetyl-alpha-D-glucosamine 1-phosphate + CoA + H(+). It carries out the reaction N-acetyl-alpha-D-glucosamine 1-phosphate + UTP + H(+) = UDP-N-acetyl-alpha-D-glucosamine + diphosphate. The protein operates within nucleotide-sugar biosynthesis; UDP-N-acetyl-alpha-D-glucosamine biosynthesis; N-acetyl-alpha-D-glucosamine 1-phosphate from alpha-D-glucosamine 6-phosphate (route II): step 2/2. It participates in nucleotide-sugar biosynthesis; UDP-N-acetyl-alpha-D-glucosamine biosynthesis; UDP-N-acetyl-alpha-D-glucosamine from N-acetyl-alpha-D-glucosamine 1-phosphate: step 1/1. It functions in the pathway bacterial outer membrane biogenesis; LPS lipid A biosynthesis. Its function is as follows. Catalyzes the last two sequential reactions in the de novo biosynthetic pathway for UDP-N-acetylglucosamine (UDP-GlcNAc). The C-terminal domain catalyzes the transfer of acetyl group from acetyl coenzyme A to glucosamine-1-phosphate (GlcN-1-P) to produce N-acetylglucosamine-1-phosphate (GlcNAc-1-P), which is converted into UDP-GlcNAc by the transfer of uridine 5-monophosphate (from uridine 5-triphosphate), a reaction catalyzed by the N-terminal domain. The polypeptide is Bifunctional protein GlmU (Levilactobacillus brevis (strain ATCC 367 / BCRC 12310 / CIP 105137 / JCM 1170 / LMG 11437 / NCIMB 947 / NCTC 947) (Lactobacillus brevis)).